The primary structure comprises 434 residues: Glycoprotein U20 (434 aa).

The first 15 residues, Met-1–Ser-15, serve as a signal peptide directing secretion. A helical membrane pass occupies residues Leu-322–Thr-342.

The protein resides in the host endoplasmic reticulum membrane. The protein localises to the host lysosome membrane. Its function is as follows. Plays a role in the down-regulation of the host stress-induced NKG2D ligand UBPL1, which enables immune cells expressing the NKG2D receptor to recognize and annihilate infected cells prior to viral spread. The protein is Glycoprotein U20 (U20) of Human herpesvirus 6B (strain Z29) (HHV-6 variant B).